The chain runs to 696 residues: Potassium voltage-gated channel subfamily KQT member 4 (696 aa).

The disordered stretch occupies residues M1 to R20. The Cytoplasmic portion of the chain corresponds to M1–G97. Residue R94 participates in a 1,2-diacyl-sn-glycero-3-phospho-(1D-myo-inositol-4,5-bisphosphate) binding. The helical transmembrane segment at W98–L119 threads the bilayer. Topologically, residues S120–N130 are extracellular. Residues E131 to W153 traverse the membrane as a helical segment. Residues S154 to R169 are Cytoplasmic-facing. Residues F170 to A192 form a helical membrane-spanning segment. Position 173 (K173) interacts with a 1,2-diacyl-sn-glycero-3-phospho-(1D-myo-inositol-4,5-bisphosphate). Residues G193–A203 are Extracellular-facing. A helical; Voltage-sensor membrane pass occupies residues L204–T224. A 1,2-diacyl-sn-glycero-3-phospho-(1D-myo-inositol-4,5-bisphosphate) contacts are provided by R220, R221, K226, and S236. The Cytoplasmic segment spans residues W225–S236. The chain crosses the membrane as a helical span at residues K237–L259. Residues A260–Y271 lie on the Extracellular side of the membrane. An intramembrane region (pore-forming) is located at residues A272–H293. Position 294 (T294) is a topological domain, extracellular. The chain crosses the membrane as a helical span at residues W295–F323. The Cytoplasmic portion of the chain corresponds to A324–D696. A 1,2-diacyl-sn-glycero-3-phospho-(1D-myo-inositol-4,5-bisphosphate) contacts are provided by H331 and K334. The segment at A343–R352 is interaction with CALM. The segment at S445 to W484 is disordered. Polar residues predominate over residues S465–W484. Residues R536–F550 form an interaction with CALM region. The interval K547 to A651 is C-terminal assembly domain (tetramerization). The disordered stretch occupies residues G589 to E609. The segment covering P592–S606 has biased composition (basic and acidic residues). The stretch at A610–L645 forms a coiled coil.

Belongs to the potassium channel family. KQT (TC 1.A.1.15) subfamily. Kv7.4/KCNQ4 sub-subfamily. Homotetramer. Interacts (via C-terminus) with calmodulin; forms a heterooctameric structure (with 4:4 KCNQ1:CALM stoichiometry); the interaction is calcium-independent, constitutive, participates in the proper assembly of a functional channel. The interaction with calcium-free CALM controls channel trafficking whereas interaction with calcium-bound CALM regulates channel gating. May form a functional heteromultimeric channel with KCNQ3. Interacts with HSP90AB1; promotes cell surface expression of KCNQ4. As to expression, in the inner ear expressed in the outer sensory hair cells of the cochlea and in type I hair cells of the vestibular organs. Also expressed in the postsynaptic membrane of the calyx nerve endings innervating type I cells. In the brain expressed in neurons of many, but not all, nuclei of the central auditory pathway. Absent from most other brain regions.

Its subcellular location is the basal cell membrane. It catalyses the reaction K(+)(in) = K(+)(out). Its activity is regulated as follows. Two molecules of phosphatidylinositol-4,5-bisphosphate (PIP2-I and PIP2-II) are essential to activate KCNQ4 channel by inducing the coupling of the voltage-sensing domain (VSD) and the pore-forming domain (PD). Upon channel activation, PIP2-I and PIP2-II disrupt the VSD-calmodulin/CALM interaction, causing the release of CALM from the VSD which triggers the opening of the gate. Calcium suppresses KCNQ4 channel current through calcium-bound CALM C-terminus. Therefore CALM acts as calcium sensor that controls channel activity. In terms of biological role, pore-forming subunit of the voltage-gated potassium (Kv) channel involved in the regulation of sensory cells excitability in the cochlea. KCNQ4/Kv7.4 channel is composed of 4 pore-forming subunits assembled as tetramers. Promotes the outflow of potassium ions in the repolarization phase of action potential which plays a role in regulating membrane potential of excitable cells. The channel conducts a slowly activating and deactivating current. Current often shows some inward rectification at positive potentials. Channel may be selectively permeable in vitro to other cations besides potassium, in decreasing order of affinity K(+) = Rb(+) &gt; Cs(+) &gt; Na(+). Important for normal physiological function of inner ear such as sensory perception of sound. The sequence is that of Potassium voltage-gated channel subfamily KQT member 4 from Mus musculus (Mouse).